A 736-amino-acid chain; its full sequence is Polyribonucleotide nucleotidyltransferase (736 aa).

Mg(2+)-binding residues include Asp-506 and Asp-512. Positions 573–632 (PRLTTIQVPVDAIGLIIGKGGETIRSITEETGAEINIEDDGTVTIACSSVEGTHAALATI) constitute a KH domain. Residues 642-717 (GTIYLGKVRD…GKTRFALSMR (76 aa)) form the S1 motif domain.

Belongs to the polyribonucleotide nucleotidyltransferase family. The cofactor is Mg(2+).

The protein localises to the cytoplasm. It carries out the reaction RNA(n+1) + phosphate = RNA(n) + a ribonucleoside 5'-diphosphate. Involved in mRNA degradation. Catalyzes the phosphorolysis of single-stranded polyribonucleotides processively in the 3'- to 5'-direction. The polypeptide is Polyribonucleotide nucleotidyltransferase (Chlorobium limicola (strain DSM 245 / NBRC 103803 / 6330)).